A 94-amino-acid polypeptide reads, in one-letter code: Large ribosomal subunit protein bL27 (94 aa).

Residues 1–9 (MTLNNLQLF) constitute a propeptide that is removed on maturation. A disordered region spans residues 9–33 (FAHKKGGGSTSNGRDSQAKRLGAKA).

This sequence belongs to the bacterial ribosomal protein bL27 family. Post-translationally, the N-terminus is cleaved by ribosomal processing cysteine protease Prp.

The chain is Large ribosomal subunit protein bL27 from Streptococcus pneumoniae serotype 4 (strain ATCC BAA-334 / TIGR4).